Reading from the N-terminus, the 120-residue chain is NAD(P)H-quinone oxidoreductase subunit 3, chloroplastic (120 aa).

The next 3 helical transmembrane spans lie at 3-23 (ILEG…IPVI), 64-84 (MFAL…PWAV), and 89-109 (LGLS…IGLV).

Belongs to the complex I subunit 3 family. In terms of assembly, NDH is composed of at least 16 different subunits, 5 of which are encoded in the nucleus.

Its subcellular location is the plastid. The protein localises to the chloroplast thylakoid membrane. It carries out the reaction a plastoquinone + NADH + (n+1) H(+)(in) = a plastoquinol + NAD(+) + n H(+)(out). The enzyme catalyses a plastoquinone + NADPH + (n+1) H(+)(in) = a plastoquinol + NADP(+) + n H(+)(out). NDH shuttles electrons from NAD(P)H:plastoquinone, via FMN and iron-sulfur (Fe-S) centers, to quinones in the photosynthetic chain and possibly in a chloroplast respiratory chain. The immediate electron acceptor for the enzyme in this species is believed to be plastoquinone. Couples the redox reaction to proton translocation, and thus conserves the redox energy in a proton gradient. This Nephroselmis olivacea (Green alga) protein is NAD(P)H-quinone oxidoreductase subunit 3, chloroplastic.